A 205-amino-acid chain; its full sequence is Small ribosomal subunit protein mS26 (205 aa).

The N-terminal 26 residues, 1–26, are a transit peptide targeting the mitochondrion; the sequence is MLRALSTLGARPLGRPPAQFLLLARG.

Belongs to the mitochondrion-specific ribosomal protein mS26 family. In terms of assembly, component of the mitochondrial ribosome small subunit (28S) which comprises a 12S rRNA and about 30 distinct proteins.

Its subcellular location is the mitochondrion. This Bos taurus (Bovine) protein is Small ribosomal subunit protein mS26 (MRPS26).